Consider the following 884-residue polypeptide: Protein P (884 aa).

Residues methionine 1–glutamine 184 are terminal protein domain (TP). A spacer region spans residues leucine 185–leucine 387. Disordered regions lie at residues proline 218 to threonine 241 and arginine 299 to serine 345. Composition is skewed to polar residues over residues valine 222–threonine 241 and tyrosine 323–tyrosine 332. Residues aspartate 388–glutamine 729 are polymerase/reverse transcriptase domain (RT). In terms of domain architecture, Reverse transcriptase spans aspartate 398–isoleucine 639. Residues aspartate 470, aspartate 590, and aspartate 591 each coordinate Mg(2+).

The protein belongs to the hepadnaviridae P protein family.

It carries out the reaction DNA(n) + a 2'-deoxyribonucleoside 5'-triphosphate = DNA(n+1) + diphosphate. The enzyme catalyses Endonucleolytic cleavage to 5'-phosphomonoester.. With respect to regulation, activated by host HSP70 and HSP40 in vitro to be able to bind the epsilon loop of the pgRNA. Because deletion of the RNase H region renders the protein partly chaperone-independent, the chaperones may be needed indirectly to relieve occlusion of the RNA-binding site by this domain. Inhibited by several reverse-transcriptase inhibitors: Lamivudine, Adefovir and Entecavir. Its function is as follows. Multifunctional enzyme that converts the viral RNA genome into dsDNA in viral cytoplasmic capsids. This enzyme displays a DNA polymerase activity that can copy either DNA or RNA templates, and a ribonuclease H (RNase H) activity that cleaves the RNA strand of RNA-DNA heteroduplexes in a partially processive 3'- to 5'-endonucleasic mode. Neo-synthesized pregenomic RNA (pgRNA) are encapsidated together with the P protein, and reverse-transcribed inside the nucleocapsid. Initiation of reverse-transcription occurs first by binding the epsilon loop on the pgRNA genome, and is initiated by protein priming, thereby the 5'-end of (-)DNA is covalently linked to P protein. Partial (+)DNA is synthesized from the (-)DNA template and generates the relaxed circular DNA (RC-DNA) genome. After budding and infection, the RC-DNA migrates in the nucleus, and is converted into a plasmid-like covalently closed circular DNA (cccDNA). The activity of P protein does not seem to be necessary for cccDNA generation, and is presumably released from (+)DNA by host nuclear DNA repair machinery. This Marmota monax (Woodchuck) protein is Protein P.